A 382-amino-acid polypeptide reads, in one-letter code: Diphosphomevalonate decarboxylase ERG19 (382 aa).

(R)-5-diphosphomevalonate-binding positions include 22 to 25 (YWGK), Arg-78, 157 to 162 (SGSACR), and Thr-213.

Belongs to the diphosphomevalonate decarboxylase family. As to quaternary structure, homodimer.

It catalyses the reaction (R)-5-diphosphomevalonate + ATP = isopentenyl diphosphate + ADP + phosphate + CO2. Its pathway is isoprenoid biosynthesis; isopentenyl diphosphate biosynthesis via mevalonate pathway; isopentenyl diphosphate from (R)-mevalonate: step 3/3. Functionally, diphosphomevalonate decarboxylase; part of the second module of ergosterol biosynthesis pathway that includes the middle steps of the pathway. MVD1 converts diphosphomevalonate into isopentenyl diphosphate. The second module is carried out in the vacuole and involves the formation of farnesyl diphosphate, which is also an important intermediate in the biosynthesis of ubiquinone, dolichol, heme and prenylated proteins. Activity by the mevalonate kinase ERG12 (FG05912) first converts mevalonate into 5-phosphomevalonate. 5-phosphomevalonate is then further converted to 5-diphosphomevalonate by the phosphomevalonate kinase ERG8 (FG09764). The diphosphomevalonate decarboxylase ERG19 (FG10424) then produces isopentenyl diphosphate. The isopentenyl-diphosphate delta-isomerase IDI1 (FG09722) then catalyzes the 1,3-allylic rearrangement of the homoallylic substrate isopentenyl (IPP) to its highly electrophilic allylic isomer, dimethylallyl diphosphate (DMAPP). Finally the farnesyl diphosphate synthase ERG20 (FG06784) catalyzes the sequential condensation of isopentenyl pyrophosphate with dimethylallyl pyrophosphate, and then with the resultant geranylpyrophosphate to the ultimate product farnesyl pyrophosphate. The chain is Diphosphomevalonate decarboxylase ERG19 from Gibberella zeae (strain ATCC MYA-4620 / CBS 123657 / FGSC 9075 / NRRL 31084 / PH-1) (Wheat head blight fungus).